We begin with the raw amino-acid sequence, 415 residues long: Dynein assembly factor with WD repeat domains 1 (415 aa).

WD repeat units lie at residues 90–129 (AHIL…ELHT), 132–174 (GHKN…HTFR), 175–214 (GHTA…EVVT), 217–256 (GHLA…KVHT), 259–298 (GHCA…YVAT), 301–340 (GHDD…CVTK), 343–384 (GHEG…QVLE), and 386–415 (HTDE…RIWR).

Belongs to the WD repeat WDR69 family. In terms of assembly, interacts with IFT46. In terms of tissue distribution, in early mouse embryos, expression is limited to distal, motile ciliated cells of the node.

It localises to the cytoplasm. The protein resides in the cytoskeleton. The protein localises to the flagellum basal body. Its subcellular location is the flagellum axoneme. Required for axonemal dynein assembly and ciliary motility in ciliated organs, including Kupffer's vesicle, during embryogenesis. Facilitates the onset of robust cilia motility during development. This Mus musculus (Mouse) protein is Dynein assembly factor with WD repeat domains 1.